The sequence spans 237 residues: Uridylate kinase (237 aa).

Residue 9–12 participates in ATP binding; that stretch reads KLSG. The tract at residues 17-22 is involved in allosteric activation by GTP; sequence GTQGYG. Glycine 51 provides a ligand contact to UMP. 2 residues coordinate ATP: glycine 52 and arginine 56. UMP-binding positions include aspartate 71 and 132-139; that span reads CGNPFFTT. ATP contacts are provided by threonine 159, tyrosine 165, and aspartate 168.

This sequence belongs to the UMP kinase family. In terms of assembly, homohexamer.

The protein resides in the cytoplasm. It catalyses the reaction UMP + ATP = UDP + ADP. It participates in pyrimidine metabolism; CTP biosynthesis via de novo pathway; UDP from UMP (UMPK route): step 1/1. Allosterically activated by GTP. Inhibited by UTP. Its function is as follows. Catalyzes the reversible phosphorylation of UMP to UDP. This is Uridylate kinase from Parasynechococcus marenigrum (strain WH8102).